A 57-amino-acid polypeptide reads, in one-letter code: Protein translocase subunit SecE (57 aa).

The chain crosses the membrane as a helical span at residues 34-54 (AGILLIGAIGFLVFLIMGGIV).

The protein belongs to the SecE/SEC61-gamma family. As to quaternary structure, component of the Sec protein translocase complex. Heterotrimer consisting of SecY (alpha), SecG (beta) and SecE (gamma) subunits. The heterotrimers can form oligomers, although 1 heterotrimer is thought to be able to translocate proteins. Interacts with the ribosome. May interact with SecDF, and other proteins may be involved.

The protein resides in the cell membrane. Functionally, essential subunit of the Sec protein translocation channel SecYEG. Clamps together the 2 halves of SecY. May contact the channel plug during translocation. The polypeptide is Protein translocase subunit SecE (Halobacterium salinarum (strain ATCC 29341 / DSM 671 / R1)).